A 637-amino-acid polypeptide reads, in one-letter code: MNTGIIDLFDNHVDSIPTILPHQLATLDYLVRTIIDENRSVLLFHIMGSGKTIIALLFALVASRFKKVYILVPNINILKIFNYNMGVAMNLFNDEFIAENIFIHSTTGFYSLNYNDNVINYNGLSRYNNSIFIVDEAHNIFGNNTGELMTVIKNKNKIPFLLLSGSPITNTPNTLGHIIDLMSEETIDFGEIISRGKKVIQTLLNERGVNVLKDLLKGRISYYEMPDKDLPTIRYHGRKFLDTRVVYCHMSKLQERDYMITRRQLCYHEMFDKNMYNVSMAVLGQLNLMNNLDTLFQEQDKELYPNLKINNGVLYGEELVTLNISSKFKYFINRIQTLNGKHFIYFSNSTYGGLVIKYIMLSNGYSEYNGSQGTNPHMINGKPKTFAIVTSKMKSSLEDLLDVYNSPENDDGSQLMFLFSSNIMSESYTLKEVRHIWFMTIPDTFSQYNQILGRSIRKFSYADISEPVNVYLLAAVYSDFNDEVTSLNDYTQDELINVLPFDIKKLLYLKFKTKETNRIYSILQEMSETYSLPPHPSIVKVLLGELVRQFFYNNSRIKYNDSKLLKMVTSVIKNKEDARNYIDDIVNGHFFVSNKVFDKSLLYKYENDIITVPFRLSYEPFVWGVNFRKEYNVVSSP.

Positions 32 to 185 (RTIIDENRSV…GHIIDLMSEE (154 aa)) constitute a Helicase ATP-binding domain. 45–52 (HIMGSGKT) contacts ATP. The DEXH box motif lies at 135–138 (DEAH). The Helicase C-terminal domain occupies 327–507 (KFKYFINRIQ…VLPFDIKKLL (181 aa)).

This sequence belongs to the helicase family. VETF subfamily. In terms of assembly, heterodimer of a 70 kDa and a 82 kDa subunit. Part of the early transcription complex composed of ETF, RAP94/OPG109, and the DNA-directed RNA polymerase.

The protein localises to the virion. Functionally, acts with RNA polymerase to initiate transcription from early gene promoters. Is recruited by the RPO-associated protein of 94 kDa RAP94/OPG109 to form the early transcription complex, which also contains the core RNA polymerase. ETF heterodimer binds to early gene promoters. The protein is Early transcription factor 70 kDa subunit (OPG118) of Homo sapiens (Human).